Reading from the N-terminus, the 504-residue chain is Galactan beta-1,4-galactosyltransferase GALS3 (504 aa).

A helical transmembrane segment spans residues 30–50 (LTFMALLVLCTLATLLPFIPS). One can recognise a GT92 domain in the interval 242–456 (DYLYCGSSLY…YHGSISQRRE (215 aa)).

This sequence belongs to the glycosyltransferase 92 family. Expressed in root caps, mature leaves, top of the stems and seeds.

It localises to the golgi apparatus membrane. Involved in the biosynthesis of beta-1,4-galactan. Beta-1,4-galactans are abundant polysaccharides in plant cell walls and are found as side-chain of rhamnogalacturonan I, which is a major component of pectin. The protein is Galactan beta-1,4-galactosyltransferase GALS3 of Arabidopsis thaliana (Mouse-ear cress).